The sequence spans 172 residues: ATP synthase subunit b (172 aa).

A helical transmembrane segment spans residues 17–37; sequence IVFSAIVLAIVLPFFWWFVIP.

It belongs to the ATPase B chain family. F-type ATPases have 2 components, F(1) - the catalytic core - and F(0) - the membrane proton channel. F(1) has five subunits: alpha(3), beta(3), gamma(1), delta(1), epsilon(1). F(0) has three main subunits: a(1), b(2) and c(10-14). The alpha and beta chains form an alternating ring which encloses part of the gamma chain. F(1) is attached to F(0) by a central stalk formed by the gamma and epsilon chains, while a peripheral stalk is formed by the delta and b chains.

It localises to the cell membrane. Functionally, f(1)F(0) ATP synthase produces ATP from ADP in the presence of a proton or sodium gradient. F-type ATPases consist of two structural domains, F(1) containing the extramembraneous catalytic core and F(0) containing the membrane proton channel, linked together by a central stalk and a peripheral stalk. During catalysis, ATP synthesis in the catalytic domain of F(1) is coupled via a rotary mechanism of the central stalk subunits to proton translocation. In terms of biological role, component of the F(0) channel, it forms part of the peripheral stalk, linking F(1) to F(0). The polypeptide is ATP synthase subunit b (Tropheryma whipplei (strain TW08/27) (Whipple's bacillus)).